The sequence spans 489 residues: MSSAVKLADRYLMTKRLGDGTFGEVMLAKKIDTGDRVAIKRMKKKFYSWEEAMSLREVKSLKKLNHPNIIKLREVIRENDILYFVFEFMQENLYELMKDRDRYFPESVIRNIIYQVLQGLAFMHKNGFFHRDMKPENIMCNGTELVKIADFGLAREIRSKPPYTDYVSTRWYRAPEILLRSTSYNSPIDMWALGCIMAELYILRPLFPGTSEMDQLFKIISILGTPNKDEWPEGYQLASAMNFRFQQVVATPMEQVVNTISKEGMKLMMDMMLWNPEKRPNANQSLRYKYFQVAEKLGAPVVSQPAPGSIRKTSAASVKSDTKAMTAKAAKKDYIGSENVSPQQPAKVIDRHINRNLPLNKETLFEKSDNKPLGPTKSNEAKPTAKEIYLSKSKYVPGQVSKDTHQNQIMTTNGLTGTTKTTTFSAKKEGRTAVQTRFEYAYGYIPSFGARQTGPTVSNQTNNHSANNSHSPNKMSNTGRVDWAAKYVK.

One can recognise a Protein kinase domain in the interval Tyr-11–Phe-291. ATP-binding positions include Leu-17–Val-25 and Lys-40. The active-site Proton acceptor is the Asp-132. 2 disordered regions span residues Glu-366 to Ala-385 and Gln-452 to Lys-489. Residues Ser-458–Asn-473 are compositionally biased toward low complexity.

Belongs to the protein kinase superfamily. CMGC Ser/Thr protein kinase family. RCK subfamily. It depends on Mg(2+) as a cofactor. Expressed in head neurons including amphid and labial sensory neurons and 3 pairs of neurons in the tail including phasmid sensory neurons. In male, expressed in the tail including the sensory rays and the spicule.

It localises to the perikaryon. The protein localises to the cell projection. The protein resides in the dendrite. It is found in the axon. Its subcellular location is the cilium. The catalysed reaction is L-seryl-[protein] + ATP = O-phospho-L-seryl-[protein] + ADP + H(+). It catalyses the reaction L-threonyl-[protein] + ATP = O-phospho-L-threonyl-[protein] + ADP + H(+). Serine/threonine-protein kinase which is required for ciliogenesis. Regulates the length and the morphology of sensory neuron cilia. In addition, plays a role in the anterograde intraflagellar transport (IFT) in the cilia by regulating the undocking of kinesin-II motor complex (composed of klp-11, klp-20 and kap-1) before reaching the distal segment and the docking of kinesin motor osm-3 onto IFT cargos. This Caenorhabditis elegans protein is Serine/threonine-protein kinase dyf-5.